The primary structure comprises 326 residues: Protoheme IX farnesyltransferase (326 aa).

8 consecutive transmembrane segments (helical) span residues 35-55, 60-80, 106-126, 129-149, 157-177, 185-205, 238-258, and 289-309; these read LIPL…GWPL, LICT…LNCL, TAFI…VSGV, LAAG…TALL, IVVG…AATG, WLFA…ALLL, VLLS…YGLM, and WSIL…SALA.

Belongs to the UbiA prenyltransferase family. Protoheme IX farnesyltransferase subfamily.

The protein resides in the cell inner membrane. The catalysed reaction is heme b + (2E,6E)-farnesyl diphosphate + H2O = Fe(II)-heme o + diphosphate. Its pathway is porphyrin-containing compound metabolism; heme O biosynthesis; heme O from protoheme: step 1/1. Converts heme B (protoheme IX) to heme O by substitution of the vinyl group on carbon 2 of heme B porphyrin ring with a hydroxyethyl farnesyl side group. This chain is Protoheme IX farnesyltransferase, found in Synechococcus sp. (strain CC9902).